The chain runs to 733 residues: Non-secreted LysM effector LCP1 (733 aa).

Residues 1–22 (MMRRPWLLSALVAWVKLPSVQG) form the signal peptide. LysM domains lie at 211-256 (SEYT…KLCI) and 261-309 (DVYV…TICI). N-linked (GlcNAc...) asparagine glycosylation is found at Asn-298, Asn-304, Asn-340, Asn-350, Asn-381, Asn-432, Asn-442, Asn-455, and Asn-538. The LysM 3 domain occupies 347 to 393 (LFHNVTAGDDCGTIGLKYSISLDDFIFLNSMIWPNCTNLWLRASYCV). Low complexity predominate over residues 605–629 (SPITSSAPTSTTASSKTSSSAAQPT). Positions 605–637 (SPITSSAPTSTTASSKTSSSAAQPTNVSTDGTC) are disordered. N-linked (GlcNAc...) asparagine glycosylation occurs at Asn-630. 2 consecutive Chitin-binding type-1 domains span residues 634–680 (DGTC…KCDA) and 688–733 (DGTC…GVCT). 8 cysteine pairs are disulfide-bonded: Cys-637-Cys-654, Cys-645-Cys-660, Cys-653-Cys-667, Cys-671-Cys-678, Cys-691-Cys-708, Cys-699-Cys-714, Cys-707-Cys-721, and Cys-725-Cys-732.

This sequence belongs to the secreted LysM effector family.

The protein localises to the secreted. The protein resides in the cell membrane. It is found in the vacuole. In terms of biological role, secreted effector that enables the plant pathogenic fungus to manipulate host defenses for successful infection. Not involved in host recognition and penetration but suppresses host cell death and promotes fumonisin biosynthesis while the pathogen colonizes maize kernels. The protein is Non-secreted LysM effector LCP1 of Gibberella moniliformis (strain M3125 / FGSC 7600) (Maize ear and stalk rot fungus).